A 145-amino-acid chain; its full sequence is Transthyretin (145 aa).

The signal sequence occupies residues 1 to 20 (MASHRLFLLCLAGLVFMSEA). Residue Cys28 is modified to Sulfocysteine. Lys33 provides a ligand contact to L-thyroxine. Position 60 is a 4-carboxyglutamate (Glu60). Ser70 is modified (phosphoserine). Residue Glu72 participates in L-thyroxine binding. N-linked (GlcNAc...) asparagine glycosylation is present at Asn116. An L-thyroxine-binding site is contributed by Ser135.

It belongs to the transthyretin family. As to quaternary structure, homotetramer. Dimer of dimers. In the homotetramer, subunits assemble around a central channel that can accommodate two ligand molecules. Interacts with RBP4. Post-translationally, sulfonation of the reactive cysteine Cys-28 enhances the stability of the native conformation of TTR, avoiding misassembly of the protein leading to amyloid formation.

The protein localises to the secreted. Its function is as follows. Thyroid hormone-binding protein. Probably transports thyroxine from the bloodstream to the brain. The sequence is that of Transthyretin (TTR) from Erinaceus europaeus (Western European hedgehog).